The primary structure comprises 102 residues: uncharacterized protein (102 aa).

Transmembrane regions (helical) follow at residues 24 to 44 (AFIV…PVLT) and 55 to 75 (IGAV…TWIL).

It is found in the cell membrane. This is an uncharacterized protein from Bacillus subtilis (strain 168).